A 468-amino-acid polypeptide reads, in one-letter code: Phosphoglucosamine mutase (468 aa).

Catalysis depends on serine 112, which acts as the Phosphoserine intermediate. Positions 112, 254, 256, and 258 each coordinate Mg(2+). Residue serine 112 is modified to Phosphoserine.

It belongs to the phosphohexose mutase family. The cofactor is Mg(2+). Post-translationally, activated by phosphorylation.

It catalyses the reaction alpha-D-glucosamine 1-phosphate = D-glucosamine 6-phosphate. In terms of biological role, catalyzes the conversion of glucosamine-6-phosphate to glucosamine-1-phosphate. In Prochlorococcus marinus (strain MIT 9313), this protein is Phosphoglucosamine mutase.